We begin with the raw amino-acid sequence, 367 residues long: Probable sugar phosphate/phosphate translocator At1g48230 (367 aa).

10 helical membrane-spanning segments follow: residues 9–29, 43–63, 76–96, 106–126, 140–160, 163–183, 193–213, 229–249, 257–276, and 280–302; these read LVLT…VILY, LPIT…FLLI, FEIY…SLWF, VAFI…MAVV, MVLV…FNVI, VYQV…QVLL, VTSL…PWYV, WIFF…FLVI, IRVA…TVIF, and TITG…YNYI. Residues 321-330 show a composition bias toward basic and acidic residues; it reads ITKDWKEKNS. A disordered region spans residues 321–341; the sequence is ITKDWKEKNSSDGGSPRGLEL.

Belongs to the TPT transporter family. TPT (TC 2.A.7.9) subfamily.

Its subcellular location is the membrane. This is Probable sugar phosphate/phosphate translocator At1g48230 from Arabidopsis thaliana (Mouse-ear cress).